We begin with the raw amino-acid sequence, 272 residues long: Tumor necrosis factor receptor superfamily member 4 (272 aa).

Positions 1-19 (MYVWVQQPTALLLLALTLG) are cleaved as a signal peptide. Topologically, residues 20–211 (VTARRLNCVK…PPTLVTPEGP (192 aa)) are extracellular. 2 TNFR-Cys repeats span residues 26–61 (NCVKHTYPSGHKCCRECQPGHGMVSRCDHTRDTLCH) and 62–103 (PCET…DTVC). 8 cysteine pairs are disulfide-bonded: cysteine 27/cysteine 38, cysteine 39/cysteine 52, cysteine 42/cysteine 60, cysteine 63/cysteine 77, cysteine 80/cysteine 95, cysteine 83/cysteine 103, cysteine 105/cysteine 123, and cysteine 126/cysteine 139. A TNFR-Cys 3; truncated repeat occupies 104-124 (RCRPGTQPRQDSGYKLGVDCV). The stretch at 125 to 165 (PCPPGHFSPGNNQACKPWTNCTLSGKQTRHPASDSLDAVCE) is one TNFR-Cys 4 repeat. The N-linked (GlcNAc...) asparagine glycan is linked to asparagine 144. A disulfide bond links cysteine 145 and cysteine 164. The helical transmembrane segment at 212–236 (AFAVLLGLGLGLLAPLTVLLALYLL) threads the bilayer. The Cytoplasmic segment spans residues 237 to 272 (RKAWRLPNTPKPCWGNSFRTPIQEEHTDAHFTLAKI).

Interacts with TRAF2, TRAF3 and TRAF5. In terms of tissue distribution, expressed in CD4(+) T-cells and in T-helper Th17 cells (at protein level).

It localises to the membrane. Its function is as follows. Receptor for TNFSF4/OX40L/GP34. Is a costimulatory molecule implicated in long-term T-cell immunity. In Mus musculus (Mouse), this protein is Tumor necrosis factor receptor superfamily member 4 (Tnfrsf4).